The chain runs to 117 residues: Large ribosomal subunit protein uL18 (117 aa).

Belongs to the universal ribosomal protein uL18 family. As to quaternary structure, part of the 50S ribosomal subunit; part of the 5S rRNA/L5/L18/L25 subcomplex. Contacts the 5S and 23S rRNAs.

In terms of biological role, this is one of the proteins that bind and probably mediate the attachment of the 5S RNA into the large ribosomal subunit, where it forms part of the central protuberance. The sequence is that of Large ribosomal subunit protein uL18 from Phytoplasma australiense.